The primary structure comprises 938 residues: Isoleucine--tRNA ligase (938 aa).

The short motif at 58–68 (PYANGNIHMGH) is the 'HIGH' region element. Glutamate 566 serves as a coordination point for L-isoleucyl-5'-AMP. Residues 607 to 611 (KMSKS) carry the 'KMSKS' region motif. Lysine 610 is an ATP binding site. 4 residues coordinate Zn(2+): cysteine 906, cysteine 909, cysteine 926, and cysteine 929.

Belongs to the class-I aminoacyl-tRNA synthetase family. IleS type 1 subfamily. In terms of assembly, monomer. Requires Zn(2+) as cofactor.

Its subcellular location is the cytoplasm. The catalysed reaction is tRNA(Ile) + L-isoleucine + ATP = L-isoleucyl-tRNA(Ile) + AMP + diphosphate. In terms of biological role, catalyzes the attachment of isoleucine to tRNA(Ile). As IleRS can inadvertently accommodate and process structurally similar amino acids such as valine, to avoid such errors it has two additional distinct tRNA(Ile)-dependent editing activities. One activity is designated as 'pretransfer' editing and involves the hydrolysis of activated Val-AMP. The other activity is designated 'posttransfer' editing and involves deacylation of mischarged Val-tRNA(Ile). The polypeptide is Isoleucine--tRNA ligase (Nitratidesulfovibrio vulgaris (strain ATCC 29579 / DSM 644 / CCUG 34227 / NCIMB 8303 / VKM B-1760 / Hildenborough) (Desulfovibrio vulgaris)).